Here is a 430-residue protein sequence, read N- to C-terminus: tRNA(Ile)-lysidine synthase (430 aa).

27-32 (SGGSDS) serves as a coordination point for ATP.

The protein belongs to the tRNA(Ile)-lysidine synthase family.

It is found in the cytoplasm. The catalysed reaction is cytidine(34) in tRNA(Ile2) + L-lysine + ATP = lysidine(34) in tRNA(Ile2) + AMP + diphosphate + H(+). Its function is as follows. Ligates lysine onto the cytidine present at position 34 of the AUA codon-specific tRNA(Ile) that contains the anticodon CAU, in an ATP-dependent manner. Cytidine is converted to lysidine, thus changing the amino acid specificity of the tRNA from methionine to isoleucine. The protein is tRNA(Ile)-lysidine synthase of Rickettsia akari (strain Hartford).